The following is a 379-amino-acid chain: 3-isopropylmalate dehydrogenase 1 (379 aa).

Positions 101, 111, 139, and 230 each coordinate substrate. The Mg(2+) site is built by D230, D254, and D258. Residue 293-305 coordinates NAD(+); that stretch reads GSAPDIAGKGIAN.

This sequence belongs to the isocitrate and isopropylmalate dehydrogenases family. LeuB type 1 subfamily. As to quaternary structure, homodimer. Mg(2+) serves as cofactor. Mn(2+) is required as a cofactor.

The protein localises to the cytoplasm. It carries out the reaction (2R,3S)-3-isopropylmalate + NAD(+) = 4-methyl-2-oxopentanoate + CO2 + NADH. It functions in the pathway amino-acid biosynthesis; L-leucine biosynthesis; L-leucine from 3-methyl-2-oxobutanoate: step 3/4. Functionally, catalyzes the oxidation of 3-carboxy-2-hydroxy-4-methylpentanoate (3-isopropylmalate) to 3-carboxy-4-methyl-2-oxopentanoate. The product decarboxylates to 4-methyl-2 oxopentanoate. The chain is 3-isopropylmalate dehydrogenase 1 from Bradyrhizobium diazoefficiens (strain JCM 10833 / BCRC 13528 / IAM 13628 / NBRC 14792 / USDA 110).